The chain runs to 129 residues: Aspartate 1-decarboxylase (129 aa).

Ser-25 functions as the Schiff-base intermediate with substrate; via pyruvic acid in the catalytic mechanism. Ser-25 carries the post-translational modification Pyruvic acid (Ser). Thr-57 contacts substrate. Tyr-58 functions as the Proton donor in the catalytic mechanism. Gly-73–Ala-75 contacts substrate.

Belongs to the PanD family. Heterooctamer of four alpha and four beta subunits. Pyruvate is required as a cofactor. Post-translationally, is synthesized initially as an inactive proenzyme, which is activated by self-cleavage at a specific serine bond to produce a beta-subunit with a hydroxyl group at its C-terminus and an alpha-subunit with a pyruvoyl group at its N-terminus.

Its subcellular location is the cytoplasm. The enzyme catalyses L-aspartate + H(+) = beta-alanine + CO2. It participates in cofactor biosynthesis; (R)-pantothenate biosynthesis; beta-alanine from L-aspartate: step 1/1. Its function is as follows. Catalyzes the pyruvoyl-dependent decarboxylation of aspartate to produce beta-alanine. In Hydrogenovibrio crunogenus (strain DSM 25203 / XCL-2) (Thiomicrospira crunogena), this protein is Aspartate 1-decarboxylase.